We begin with the raw amino-acid sequence, 426 residues long: Glutamyl-tRNA reductase (426 aa).

Residues Thr-52–Arg-55, Ser-110, Glu-115–Glu-117, and Gln-121 contribute to the substrate site. The active-site Nucleophile is the Cys-53. An NADP(+)-binding site is contributed by Gly-190–Ala-195.

The protein belongs to the glutamyl-tRNA reductase family. As to quaternary structure, homodimer.

The enzyme catalyses (S)-4-amino-5-oxopentanoate + tRNA(Glu) + NADP(+) = L-glutamyl-tRNA(Glu) + NADPH + H(+). The protein operates within porphyrin-containing compound metabolism; protoporphyrin-IX biosynthesis; 5-aminolevulinate from L-glutamyl-tRNA(Glu): step 1/2. In terms of biological role, catalyzes the NADPH-dependent reduction of glutamyl-tRNA(Glu) to glutamate 1-semialdehyde (GSA). This is Glutamyl-tRNA reductase from Saccharolobus solfataricus (strain ATCC 35092 / DSM 1617 / JCM 11322 / P2) (Sulfolobus solfataricus).